The sequence spans 110 residues: Insulin (110 aa).

An N-terminal signal peptide occupies residues 1–24; it reads MALWMHLLTVLALLALWGPNTGQA. 3 disulfide bridges follow: Cys-31/Cys-96, Cys-43/Cys-109, and Cys-95/Cys-100. Residues 57–87 constitute a propeptide, c peptide; sequence ELEDPQVEQTELGMGLGAGGLQPLALEMALQ.

This sequence belongs to the insulin family. Heterodimer of a B chain and an A chain linked by two disulfide bonds.

It is found in the secreted. Insulin decreases blood glucose concentration. It increases cell permeability to monosaccharides, amino acids and fatty acids. It accelerates glycolysis, the pentose phosphate cycle, and glycogen synthesis in liver. The sequence is that of Insulin (INS) from Cavia porcellus (Guinea pig).